A 457-amino-acid chain; its full sequence is Flavin-containing monooxygenase FMO GS-OX2 (457 aa).

17-22 provides a ligand contact to FAD; that stretch reads GAGAAG. Residue 211–216 coordinates NADP(+); it reads GNFASG.

Belongs to the FMO family.

It catalyses the reaction a (Z)-omega-(methylsulfanyl)-N-sulfo-alkylhydroximate S-glucoside + NADPH + O2 + H(+) = a (Z)-omega-(methylsulfinyl)-alkyl-glucosinolate + NADP(+) + H2O. Its function is as follows. Catalyzes the conversion of methylthioalkyl glucosinolates of any chain length into methylsulfinylalkyl glucosinolates. In Arabidopsis thaliana (Mouse-ear cress), this protein is Flavin-containing monooxygenase FMO GS-OX2 (FMOGS-OX2).